The chain runs to 1111 residues: Lon protease homolog, mitochondrial (1111 aa).

A mitochondrion-targeting transit peptide spans 1–21 (MLRSSRSRLVTRNILLRQFKN). Disordered stretches follow at residues 85-177 (IQLK…AKQP) and 288-311 (PPTSEQNLKDESDVSKSEGVENNE). Positions 88–125 (KQDDKGKDIDQPESENRKKEEEQVPTEEKDNDTAKESE) are enriched in basic and acidic residues. The segment covering 126-135 (TSQQRDSVAE) has biased composition (polar residues). Residues 145 to 167 (GASGNGESSGNGSGDDGNNGSGN) show a composition bias toward gly residues. Residues 185–450 (VMALPISRRP…KALTVLKKEL (266 aa)) enclose the Lon N-terminal domain. Residues 294–306 (NLKDESDVSKSEG) are compositionally biased toward basic and acidic residues. An ATP-binding site is contributed by 602–609 (GPPGVGKT). Composition is skewed to basic and acidic residues over residues 819–835 (ENEEVKDQKDIKVKQSE) and 853–865 (ELIKTQKSHDNKG). The tract at residues 819 to 866 (ENEEVKDQKDIKVKQSENKSSAEASTVESTTEENELIKTQKSHDNKGS) is disordered. A Lon proteolytic domain is found at 899-1085 (STPPGVVMGL…EDVFQRLFGD (187 aa)). Active-site residues include Ser-991 and Lys-1034.

It belongs to the peptidase S16 family. Homohexamer or homoheptamer. Organized in a ring with a central cavity.

The protein localises to the mitochondrion matrix. The catalysed reaction is Hydrolysis of proteins in presence of ATP.. In terms of biological role, ATP-dependent serine protease that mediates the selective degradation of misfolded, unassembled or oxidatively damaged polypeptides as well as certain short-lived regulatory proteins in the mitochondrial matrix. May also have a chaperone function in the assembly of inner membrane protein complexes. Participates in the regulation of mitochondrial gene expression and in the maintenance of the integrity of the mitochondrial genome. Binds to mitochondrial DNA in a site-specific manner. The chain is Lon protease homolog, mitochondrial from Kluyveromyces lactis (strain ATCC 8585 / CBS 2359 / DSM 70799 / NBRC 1267 / NRRL Y-1140 / WM37) (Yeast).